The primary structure comprises 267 residues: Phosphonates import ATP-binding protein PhnC 1 (267 aa).

In terms of domain architecture, ABC transporter spans 3–247; that stretch reads LSLDGVDLVH…ALDALYANEQ (245 aa). An ATP-binding site is contributed by 36 to 43; sequence GPSGAGKT.

Belongs to the ABC transporter superfamily. Phosphonates importer (TC 3.A.1.9.1) family. As to quaternary structure, the complex is composed of two ATP-binding proteins (PhnC), two transmembrane proteins (PhnE) and a solute-binding protein (PhnD).

Its subcellular location is the cell inner membrane. The catalysed reaction is phosphonate(out) + ATP + H2O = phosphonate(in) + ADP + phosphate + H(+). In terms of biological role, part of the ABC transporter complex PhnCDE involved in phosphonates import. Responsible for energy coupling to the transport system. The sequence is that of Phosphonates import ATP-binding protein PhnC 1 from Pseudomonas aeruginosa (strain ATCC 15692 / DSM 22644 / CIP 104116 / JCM 14847 / LMG 12228 / 1C / PRS 101 / PAO1).